Reading from the N-terminus, the 1263-residue chain is DNA-directed RNA polymerase subunit beta (1263 aa).

The protein belongs to the RNA polymerase beta chain family. As to quaternary structure, the RNAP catalytic core consists of 2 alpha, 1 beta, 1 beta' and 1 omega subunit. When a sigma factor is associated with the core the holoenzyme is formed, which can initiate transcription.

The enzyme catalyses RNA(n) + a ribonucleoside 5'-triphosphate = RNA(n+1) + diphosphate. Functionally, DNA-dependent RNA polymerase catalyzes the transcription of DNA into RNA using the four ribonucleoside triphosphates as substrates. This is DNA-directed RNA polymerase subunit beta from Thermotoga sp. (strain RQ2).